The sequence spans 289 residues: Aquaporin-2 (289 aa).

Residues Met1–Arg36 form a disordered region. Topologically, residues Met1 to His47 are cytoplasmic. A helical transmembrane segment spans residues Phe48 to Ile68. Topologically, residues Cys69–Leu90 are extracellular. Residues Ile91–Val111 traverse the membrane as a helical segment. Topologically, residues Ser112 to Cys135 are cytoplasmic. The NPA 1 motif lies at Asn117 to Ala119. Residues Val136 to Met156 form a helical membrane-spanning segment. The Extracellular segment spans residues Thr157–Arg175. Residues Gly176–Val196 traverse the membrane as a helical segment. At Glu197–Asn202 the chain is on the cytoplasmic side. The chain crosses the membrane as a helical span at residues Phe203–Tyr223. Residues Thr224–His247 lie on the Extracellular side of the membrane. An NPA 2 motif is present at residues Asn229 to Ala231. Residues Trp248–Leu268 form a helical membrane-spanning segment. Topologically, residues Gln269–Asp289 are cytoplasmic.

This sequence belongs to the MIP/aquaporin (TC 1.A.8) family.

Its subcellular location is the endoplasmic reticulum membrane. The protein resides in the cell membrane. In terms of biological role, water channel required to facilitate the transport of water across membranes. Involved in freeze tolerance, osmotolerance and cell flocculation in liquid cultures. Is non-functional in most laboratory strains. The polypeptide is Aquaporin-2 (AQY2) (Saccharomyces cerevisiae (Baker's yeast)).